A 124-amino-acid polypeptide reads, in one-letter code: UPF0738 protein GWCH70_0774 (124 aa).

The protein belongs to the UPF0738 family.

In Geobacillus sp. (strain WCH70), this protein is UPF0738 protein GWCH70_0774.